The sequence spans 1040 residues: Multidrug resistance protein MdtB (1040 aa).

Helical transmembrane passes span 16-36, 347-367, 369-389, 396-416, 440-460, 472-492, 537-557, 863-883, 888-908, 911-931, 968-988, and 998-1018; these read FIMR…AGII, LMMA…NIPA, IIPG…MVFL, LTLM…IVVI, IGFT…PLLF, FAIT…TLTP, WLTL…WVFI, LGST…VLGI, FIHP…ALLA, IAGS…IGIV, ILMT…STGV, and IGMV…TPVI.

Belongs to the resistance-nodulation-cell division (RND) (TC 2.A.6) family. MdtB subfamily. As to quaternary structure, part of a tripartite efflux system composed of MdtA, MdtB and MdtC. MdtB forms a heteromultimer with MdtC.

It localises to the cell inner membrane. The MdtABC tripartite complex confers resistance against novobiocin and deoxycholate. This Escherichia coli O7:K1 (strain IAI39 / ExPEC) protein is Multidrug resistance protein MdtB.